Here is a 692-residue protein sequence, read N- to C-terminus: DNA ligase (692 aa).

NAD(+) is bound by residues 35-39 (DLVYD), 88-89 (SL), and glutamate 117. The active-site N6-AMP-lysine intermediate is the lysine 119. 4 residues coordinate NAD(+): arginine 140, glutamate 176, lysine 301, and lysine 325. Zn(2+) is bound by residues cysteine 416, cysteine 419, cysteine 434, and cysteine 439. The BRCT domain maps to 611–692 (LTNQSNSWAS…FDLIKNSKKT (82 aa)).

The protein belongs to the NAD-dependent DNA ligase family. LigA subfamily. Mg(2+) serves as cofactor. Mn(2+) is required as a cofactor.

It catalyses the reaction NAD(+) + (deoxyribonucleotide)n-3'-hydroxyl + 5'-phospho-(deoxyribonucleotide)m = (deoxyribonucleotide)n+m + AMP + beta-nicotinamide D-nucleotide.. DNA ligase that catalyzes the formation of phosphodiester linkages between 5'-phosphoryl and 3'-hydroxyl groups in double-stranded DNA using NAD as a coenzyme and as the energy source for the reaction. It is essential for DNA replication and repair of damaged DNA. The chain is DNA ligase from Mesomycoplasma hyopneumoniae (strain 7448) (Mycoplasma hyopneumoniae).